Here is a 319-residue protein sequence, read N- to C-terminus: Lipoyl synthase (319 aa).

Residues 1-28 (MVVLVDTVSSTPVRPRHPEKAARPDALS) form a disordered region. Positions 16-28 (RHPEKAARPDALS) are enriched in basic and acidic residues. Residues Cys-61, Cys-66, Cys-72, Cys-87, Cys-91, Cys-94, and Ser-300 each coordinate [4Fe-4S] cluster. The Radical SAM core domain occupies 73-289 (WDKKHATFMI…AKTAYAKGFL (217 aa)).

This sequence belongs to the radical SAM superfamily. Lipoyl synthase family. [4Fe-4S] cluster serves as cofactor.

The protein resides in the cytoplasm. It carries out the reaction [[Fe-S] cluster scaffold protein carrying a second [4Fe-4S](2+) cluster] + N(6)-octanoyl-L-lysyl-[protein] + 2 oxidized [2Fe-2S]-[ferredoxin] + 2 S-adenosyl-L-methionine + 4 H(+) = [[Fe-S] cluster scaffold protein] + N(6)-[(R)-dihydrolipoyl]-L-lysyl-[protein] + 4 Fe(3+) + 2 hydrogen sulfide + 2 5'-deoxyadenosine + 2 L-methionine + 2 reduced [2Fe-2S]-[ferredoxin]. It participates in protein modification; protein lipoylation via endogenous pathway; protein N(6)-(lipoyl)lysine from octanoyl-[acyl-carrier-protein]: step 2/2. Catalyzes the radical-mediated insertion of two sulfur atoms into the C-6 and C-8 positions of the octanoyl moiety bound to the lipoyl domains of lipoate-dependent enzymes, thereby converting the octanoylated domains into lipoylated derivatives. In Rhodopseudomonas palustris (strain HaA2), this protein is Lipoyl synthase.